A 120-amino-acid chain; its full sequence is Ribonuclease P protein component (120 aa).

Belongs to the RnpA family. In terms of assembly, consists of a catalytic RNA component (M1 or rnpB) and a protein subunit.

The enzyme catalyses Endonucleolytic cleavage of RNA, removing 5'-extranucleotides from tRNA precursor.. Functionally, RNaseP catalyzes the removal of the 5'-leader sequence from pre-tRNA to produce the mature 5'-terminus. It can also cleave other RNA substrates such as 4.5S RNA. The protein component plays an auxiliary but essential role in vivo by binding to the 5'-leader sequence and broadening the substrate specificity of the ribozyme. In Dehalococcoides mccartyi (strain ATCC BAA-2266 / KCTC 15142 / 195) (Dehalococcoides ethenogenes (strain 195)), this protein is Ribonuclease P protein component.